A 371-amino-acid chain; its full sequence is Cytochrome b (371 aa).

4 helical membrane passes run 25 to 45 (FGSMLLTCLALQTMTGFFLAI), 69 to 90 (WTMQSLHAIGASLFFICIYIHI), 105 to 125 (WLSGITLLFTLMATAFFGYVL), and 170 to 190 (FFALHFILPFIIISLSSAHIM). Heme b-binding residues include His-75 and His-89. Residues His-174 and His-188 each contribute to the heme b site. An a ubiquinone-binding site is contributed by His-193. A run of 4 helical transmembrane segments spans residues 218–238 (NKDMLTATIMITMLFITLSFL), 280–300 (LGGTLALLTSVMILATTPFTH), 312–332 (MTQTLFWILIATLITITWTAT), and 339–358 (FMFISQMASMIYFSFFFMNP).

This sequence belongs to the cytochrome b family. In terms of assembly, the cytochrome bc1 complex contains 3 respiratory subunits (MT-CYB, CYC1 and UQCRFS1), 2 core proteins (UQCRC1 and UQCRC2) and probably 6 low-molecular weight proteins. The cofactor is heme b.

It is found in the mitochondrion inner membrane. Its function is as follows. Component of the ubiquinol-cytochrome c reductase complex (complex III or cytochrome b-c1 complex) that is part of the mitochondrial respiratory chain. The b-c1 complex mediates electron transfer from ubiquinol to cytochrome c. Contributes to the generation of a proton gradient across the mitochondrial membrane that is then used for ATP synthesis. This chain is Cytochrome b (MT-CYB), found in Elapsoidea nigra (Usambara garter snake).